The chain runs to 89 residues: Neuropeptide S (89 aa).

A signal peptide spans 1-23 (MISSVKLNLILVLSLSTMHVFWC). A propeptide spanning residues 24–67 (YPVPSSKVSGKSDYFLILLNSCPTRLDRSKELAFLKPILEKMFV) is cleaved from the precursor.

The protein localises to the secreted. Modulates arousal and anxiety. May play an important anorexigenic role. Binds to its receptor NPSR1 with nanomolar affinity to increase intracellular calcium concentrations. This chain is Neuropeptide S (NPS), found in Homo sapiens (Human).